Here is a 174-residue protein sequence, read N- to C-terminus: Shikimate kinase 2 (174 aa).

An ATP-binding site is contributed by 12 to 17; that stretch reads GAGKTT. Thr16 and Asp32 together coordinate Mg(2+). Substrate-binding residues include Asp34, Arg58, and Gly79. Positions 112 to 126 are LID domain; that stretch reads EEYPQDTQRPTLTGR. Residue Arg120 coordinates ATP. Arg139 contacts substrate.

It belongs to the shikimate kinase family. AroL subfamily. As to quaternary structure, monomer. Mg(2+) is required as a cofactor.

The protein localises to the cytoplasm. It carries out the reaction shikimate + ATP = 3-phosphoshikimate + ADP + H(+). It functions in the pathway metabolic intermediate biosynthesis; chorismate biosynthesis; chorismate from D-erythrose 4-phosphate and phosphoenolpyruvate: step 5/7. Its function is as follows. Catalyzes the specific phosphorylation of the 3-hydroxyl group of shikimic acid using ATP as a cosubstrate. The sequence is that of Shikimate kinase 2 from Serratia proteamaculans (strain 568).